A 66-amino-acid polypeptide reads, in one-letter code: Large ribosomal subunit protein bL33c (66 aa).

This sequence belongs to the bacterial ribosomal protein bL33 family.

It is found in the plastid. Its subcellular location is the chloroplast. The polypeptide is Large ribosomal subunit protein bL33c (Physcomitrium patens (Spreading-leaved earth moss)).